A 221-amino-acid chain; its full sequence is Thiamine-phosphate synthase (221 aa).

4-amino-2-methyl-5-(diphosphooxymethyl)pyrimidine is bound by residues 47 to 51 (QYREK) and Asn-79. The Mg(2+) site is built by Asp-80 and Asp-99. Thr-118 contacts 4-amino-2-methyl-5-(diphosphooxymethyl)pyrimidine. 144–146 (SFT) contributes to the 2-[(2R,5Z)-2-carboxy-4-methylthiazol-5(2H)-ylidene]ethyl phosphate binding site. Lys-147 provides a ligand contact to 4-amino-2-methyl-5-(diphosphooxymethyl)pyrimidine. Residues Gly-175 and 195–196 (VT) each bind 2-[(2R,5Z)-2-carboxy-4-methylthiazol-5(2H)-ylidene]ethyl phosphate.

It belongs to the thiamine-phosphate synthase family. Requires Mg(2+) as cofactor.

The catalysed reaction is 2-[(2R,5Z)-2-carboxy-4-methylthiazol-5(2H)-ylidene]ethyl phosphate + 4-amino-2-methyl-5-(diphosphooxymethyl)pyrimidine + 2 H(+) = thiamine phosphate + CO2 + diphosphate. It catalyses the reaction 2-(2-carboxy-4-methylthiazol-5-yl)ethyl phosphate + 4-amino-2-methyl-5-(diphosphooxymethyl)pyrimidine + 2 H(+) = thiamine phosphate + CO2 + diphosphate. It carries out the reaction 4-methyl-5-(2-phosphooxyethyl)-thiazole + 4-amino-2-methyl-5-(diphosphooxymethyl)pyrimidine + H(+) = thiamine phosphate + diphosphate. It functions in the pathway cofactor biosynthesis; thiamine diphosphate biosynthesis; thiamine phosphate from 4-amino-2-methyl-5-diphosphomethylpyrimidine and 4-methyl-5-(2-phosphoethyl)-thiazole: step 1/1. In terms of biological role, condenses 4-methyl-5-(beta-hydroxyethyl)thiazole monophosphate (THZ-P) and 2-methyl-4-amino-5-hydroxymethyl pyrimidine pyrophosphate (HMP-PP) to form thiamine monophosphate (TMP). This Caldicellulosiruptor saccharolyticus (strain ATCC 43494 / DSM 8903 / Tp8T 6331) protein is Thiamine-phosphate synthase.